Reading from the N-terminus, the 372-residue chain is N-methyl-L-tryptophan oxidase (372 aa).

D4–H34 contributes to the FAD binding site. C307 bears the S-8alpha-FAD cysteine mark.

Belongs to the MSOX/MTOX family. MTOX subfamily. As to quaternary structure, monomer. FAD is required as a cofactor.

It carries out the reaction N(alpha)-methyl-L-tryptophan + O2 + H2O = L-tryptophan + formaldehyde + H2O2. Functionally, catalyzes the oxidative demethylation of N-methyl-L-tryptophan. The protein is N-methyl-L-tryptophan oxidase of Salmonella agona (strain SL483).